A 99-amino-acid chain; its full sequence is Large ribosomal subunit protein eL36 (99 aa).

The protein belongs to the eukaryotic ribosomal protein eL36 family. Component of the large ribosomal subunit. Mature ribosomes consist of a small (40S) and a large (60S) subunit. The 40S subunit contains about 32 different proteins and 1 molecule of RNA (18S). The 60S subunit contains 45 different proteins and 3 molecules of RNA (25S, 5.8S and 5S).

The protein resides in the cytoplasm. In terms of biological role, component of the ribosome, a large ribonucleoprotein complex responsible for the synthesis of proteins in the cell. The small ribosomal subunit (SSU) binds messenger RNAs (mRNAs) and translates the encoded message by selecting cognate aminoacyl-transfer RNA (tRNA) molecules. The large subunit (LSU) contains the ribosomal catalytic site termed the peptidyl transferase center (PTC), which catalyzes the formation of peptide bonds, thereby polymerizing the amino acids delivered by tRNAs into a polypeptide chain. The nascent polypeptides leave the ribosome through a tunnel in the LSU and interact with protein factors that function in enzymatic processing, targeting, and the membrane insertion of nascent chains at the exit of the ribosomal tunnel. This chain is Large ribosomal subunit protein eL36, found in Candida albicans (strain SC5314 / ATCC MYA-2876) (Yeast).